Reading from the N-terminus, the 720-residue chain is Serine/threonine-protein kinase KIN82 (720 aa).

2 stretches are compositionally biased toward polar residues: residues 1–13 and 99–116; these read MTQQ…SQRL and FNHN…STSE. Disordered stretches follow at residues 1-20 and 99-128; these read MTQQ…RSMS and FNHN…RSTI. Phosphoserine is present on S203. The segment covering 230–241 has biased composition (low complexity); it reads SPLANLSLSNSP. The tract at residues 230–257 is disordered; that stretch reads SPLANLSLSNSPIDSPRKNSETRKDQIP. Residues 244–255 show a composition bias toward basic and acidic residues; it reads SPRKNSETRKDQ. One can recognise a Protein kinase domain in the interval 324-602; it reads FEKIRLLGQG…AADIKRHPFF (279 aa). ATP contacts are provided by residues 330–338 and K353; that span reads LGQGDVGKV. Residue D449 is the Proton acceptor of the active site.

Belongs to the protein kinase superfamily. Ser/Thr protein kinase family. KIN82 subfamily.

The enzyme catalyses L-seryl-[protein] + ATP = O-phospho-L-seryl-[protein] + ADP + H(+). The catalysed reaction is L-threonyl-[protein] + ATP = O-phospho-L-threonyl-[protein] + ADP + H(+). In terms of biological role, flippase activator that phosphorylates DFN1 and DFN2 and which is involved in the generation of phospholipid asymmetry in membranes by the inward translocation of phospholipids. The chain is Serine/threonine-protein kinase KIN82 (KIN82) from Saccharomyces cerevisiae (strain ATCC 204508 / S288c) (Baker's yeast).